Reading from the N-terminus, the 122-residue chain is Large ribosomal subunit protein uL14 (122 aa).

The protein belongs to the universal ribosomal protein uL14 family. In terms of assembly, part of the 50S ribosomal subunit. Forms a cluster with proteins L3 and L19. In the 70S ribosome, L14 and L19 interact and together make contacts with the 16S rRNA in bridges B5 and B8.

Its function is as follows. Binds to 23S rRNA. Forms part of two intersubunit bridges in the 70S ribosome. The protein is Large ribosomal subunit protein uL14 of Lysinibacillus sphaericus (strain C3-41).